Here is a 521-residue protein sequence, read N- to C-terminus: Occludin (521 aa).

The Cytoplasmic portion of the chain corresponds to 1–66 (MSSRPFESPP…KWTSPPGVIR (66 aa)). One can recognise an MARVEL domain in the interval 60–268 (SPPGVIRILS…IIFFAVKTRR (209 aa)). A helical membrane pass occupies residues 67 to 89 (ILSMLVIVMCIAIFGCVASTLAW). The Extracellular segment spans residues 90–134 (DRGYGTGLMGGSIGYPYGSGFGSYGTGYGYGFGYGYGYGGYTDPR). The chain crosses the membrane as a helical span at residues 135 to 159 (AAKGFLLAMVAFCFIAALVIFVTSV). The Cytoplasmic portion of the chain corresponds to 160–169 (IRSDISRTRR). Residues 170-194 (YYLTVIILSAFLGVMMFIATIVYIM) form a helical membrane-spanning segment. Topologically, residues 195–242 (GVNPTAQASGSLYSSQIYAMCNQFYASTATGLYMDQYLYHYCVVDPQE) are extracellular. C215 and C236 are disulfide-bonded. The helical transmembrane segment at 243 to 264 (AIAIVLGFMVIVAFALIIFFAV) threads the bilayer. The Cytoplasmic segment spans residues 265–521 (KTRRKMDRYD…MVGDYDRQKT (257 aa)). S301 carries the phosphoserine modification. Positions 301–407 (SAGTQDMPPP…ETDYTTGGES (107 aa)) are disordered. The residue at position 304 (T304) is a Phosphothreonine. A phosphoserine mark is found at S312, S320, and S339. The residue at position 367 (Y367) is a Phosphotyrosine. 2 positions are modified to phosphoserine: S368 and S369. Positions 380-389 (APSKGRTGRP) are enriched in basic residues. Basic and acidic residues predominate over residues 390-399 (KRLEQDHYET). Phosphotyrosine is present on residues Y397 and Y401. 2 positions are modified to phosphothreonine; by PKC/PRKCH: T402 and T403. S407 carries the post-translational modification Phosphoserine. An OCEL domain is found at 413 to 521 (EDWIREYPPI…MVGDYDRQKT (109 aa)). Residues 424–488 (SDQQRQLYKR…EYNRLKQVKG (65 aa)) adopt a coiled-coil conformation. At S489 the chain carries Phosphoserine.

The protein belongs to the ELL/occludin family. Interacts with TJP1/ZO1. Interacts with VAPA. Interacts with CLDN1, CLDN6, CLDN9, CLDN11, CLDN12 and CLDN17. Interacts with PLSCR1. Interacts with LSR, ILDR1 and ILDR2. Interacts with TJP2/ZO2. Post-translationally, dephosphorylated by PTPRJ. Less-phosphorylated forms are found in basolateral membrane, cytosol and tight junction. More-heavily phosphorylated forms are concentrated exclusively in tight junction. Localized at tight junctions of both epithelial and endothelial cells.

Its subcellular location is the cell membrane. It is found in the cell junction. The protein localises to the tight junction. In terms of biological role, may play a role in the formation and regulation of the tight junction (TJ) paracellular permeability barrier. Interacts with ZO-1. The chain is Occludin (OCLN) from Canis lupus familiaris (Dog).